Reading from the N-terminus, the 240-residue chain is tRNA (guanine-N(1)-)-methyltransferase (240 aa).

Residues Gly112 and 132 to 137 (LGDFVL) contribute to the S-adenosyl-L-methionine site.

The protein belongs to the RNA methyltransferase TrmD family. Homodimer.

The protein localises to the cytoplasm. The catalysed reaction is guanosine(37) in tRNA + S-adenosyl-L-methionine = N(1)-methylguanosine(37) in tRNA + S-adenosyl-L-homocysteine + H(+). Specifically methylates guanosine-37 in various tRNAs. In Cyanothece sp. (strain PCC 7425 / ATCC 29141), this protein is tRNA (guanine-N(1)-)-methyltransferase.